The primary structure comprises 605 residues: Adaptin medium chain homolog APM2 (605 aa).

The segment at 150–196 is disordered; that stretch reads EEWSPGEESSSSSGSDSDSEYSNTNKRKDKKKKRKKKKGTKGKSVGK. Residues 155-171 are compositionally biased toward low complexity; the sequence is GEESSSSSGSDSDSEYS. The span at 174–196 shows a compositional bias: basic residues; sequence NKRKDKKKKRKKKKGTKGKSVGK. Residues 269-604 enclose the MHD domain; sequence KNEFFLDVIE…TVSDEEYAYI (336 aa).

It belongs to the adaptor complexes medium subunit family. In terms of assembly, component of the AP-1R complex composed of at least APM2, APL4 and APS1. Interacts with MIL1. Interacts with APL2.

It localises to the golgi apparatus membrane. The protein resides in the early endosome membrane. The protein localises to the cytoplasmic vesicle. It is found in the clathrin-coated vesicle membrane. Its function is as follows. Component of the AP-1-related (AP-1R) complex, an adapter protein complex that mediates of cargo protein sorting in clathrin-coated vesicles. AP-1R has a specific role in SNARE SNC1 sorting. In contrast to the APM1-containing AP-1 complex, AP-1R is incapable of sorting CHS3. The sequence is that of Adaptin medium chain homolog APM2 (APM2) from Saccharomyces cerevisiae (strain ATCC 204508 / S288c) (Baker's yeast).